A 265-amino-acid chain; its full sequence is Tryptophan synthase alpha chain (265 aa).

Active-site proton acceptor residues include Glu49 and Glu60.

It belongs to the TrpA family. As to quaternary structure, tetramer of two alpha and two beta chains.

The enzyme catalyses (1S,2R)-1-C-(indol-3-yl)glycerol 3-phosphate + L-serine = D-glyceraldehyde 3-phosphate + L-tryptophan + H2O. It functions in the pathway amino-acid biosynthesis; L-tryptophan biosynthesis; L-tryptophan from chorismate: step 5/5. Its function is as follows. The alpha subunit is responsible for the aldol cleavage of indoleglycerol phosphate to indole and glyceraldehyde 3-phosphate. The protein is Tryptophan synthase alpha chain of Herminiimonas arsenicoxydans.